We begin with the raw amino-acid sequence, 107 residues long: UPF0213 protein SG0387 (107 aa).

A GIY-YIG domain is found at 4–79 (SLWHLYLIRT…KQLSRAQKEH (76 aa)).

The protein belongs to the UPF0213 family.

The sequence is that of UPF0213 protein SG0387 from Sodalis glossinidius (strain morsitans).